Consider the following 730-residue polypeptide: MKIVRVALAVPLPRLFDYFVPDDVSLQIGMRVLVPFGTQKRVAIVADFPTKSDVPEDKLKAILQPLDLAPLFTPIYWDWLHWAANYYQAGLGDVLFQALPVKLRNGESAVKNDRTFWRITDAGKNALKQGELKRSKKQAEALQYLSETDLEKGNNDFSSAIWSALKAKGFIEEITIQTNPLSWQQRLGNNPIVNAENRLTLNKQQALAFSQLLFHSGFNVWLLDGVTGSGKTEIYLQYIEEILKSGKQVLVLVPEIGLTPQTVQRFKVRFNVEIDVLHSNLTDTQRLYVWDRARSGQSAIVIGTRSALFTQFSNLGAIILDEEHDSSYKQQDSWRYHARDLAIVLAQKLNISVLMGSATPSLESINNVQNGKYQHLVLSKRAGNSTALRHFVIDLKNQNIQNGLSKPLLERMKAHLEKGNQVLLFLNRRGFAPVLLCHECGWIAQCPHCEKPYTYHQHQNVLRCHHCGAQKTIPRQCGDCGSTHLVTTGLGTEQLEETLKTLFPHYSVARIDRDSTSRKGKLEGYLEDIQQGKSQILIGTQMLAKGHHFPNVTLVALVNVDSALFSLDFRAEERLAQLYIQVAGRAGRADKQGEVVLQTHYPDHPLLTTLLANGYQAFAKETLQLRHSMGLPPFTFQALIKAQARHSDLAENCLSQIADFFQSKQITGLQMLGPMPAPFSKKAGQYRWQLLLQHPSRMTLQKALREYQQAELEKNSQVRLILDVDPQDLS.

The Helicase ATP-binding domain maps to 212–378 (LLFHSGFNVW…QNGKYQHLVL (167 aa)). Residue 225–232 (GVTGSGKT) coordinates ATP. The DEAH box signature appears at 321 to 324 (DEEH). 8 residues coordinate Zn(2+): cysteine 437, cysteine 440, cysteine 446, cysteine 449, cysteine 464, cysteine 467, cysteine 477, and cysteine 480. Positions 472-640 (TIPRQCGDCG…LPPFTFQALI (169 aa)) constitute a Helicase C-terminal domain.

Belongs to the helicase family. PriA subfamily. In terms of assembly, component of the replication restart primosome. Requires Zn(2+) as cofactor.

It carries out the reaction Couples ATP hydrolysis with the unwinding of duplex DNA by translocating in the 3'-5' direction.. The catalysed reaction is ATP + H2O = ADP + phosphate + H(+). Functionally, initiates the restart of stalled replication forks, which reloads the replicative helicase on sites other than the origin of replication. Recognizes and binds to abandoned replication forks and remodels them to uncover a helicase loading site. Promotes assembly of the primosome at these replication forks. This Haemophilus influenzae (strain ATCC 51907 / DSM 11121 / KW20 / Rd) protein is Replication restart protein PriA.